The following is a 406-amino-acid chain: Tyrosine--tRNA ligase (406 aa).

Tyrosine 35 provides a ligand contact to L-tyrosine. The short motif at 40–49 is the 'HIGH' region element; it reads ATSTSLHIGH. L-tyrosine-binding residues include tyrosine 166 and glutamine 170. The short motif at 226–230 is the 'KMSKS' region element; sequence KMGKS. Lysine 229 is a binding site for ATP. The S4 RNA-binding domain maps to 341–405; the sequence is ILLIDLMVLS…IGKKRILRVI (65 aa).

The protein belongs to the class-I aminoacyl-tRNA synthetase family. TyrS type 1 subfamily. Homodimer.

The protein resides in the cytoplasm. The enzyme catalyses tRNA(Tyr) + L-tyrosine + ATP = L-tyrosyl-tRNA(Tyr) + AMP + diphosphate + H(+). Catalyzes the attachment of tyrosine to tRNA(Tyr) in a two-step reaction: tyrosine is first activated by ATP to form Tyr-AMP and then transferred to the acceptor end of tRNA(Tyr). This is Tyrosine--tRNA ligase from Borrelia turicatae (strain 91E135).